The primary structure comprises 199 residues: NAD(P)H dehydrogenase (quinone) (199 aa).

The region spanning 4–190 (VLVLYYSTYG…AGARHQGELV (187 aa)) is the Flavodoxin-like domain. Residues 10–15 (STYGHL) and 78–80 (TRF) contribute to the FMN site. Tyrosine 12 provides a ligand contact to NAD(+). Tryptophan 98 is a substrate binding site. FMN is bound by residues 113–119 (STATQHG) and histidine 134.

Belongs to the WrbA family. The cofactor is FMN.

It catalyses the reaction a quinone + NADH + H(+) = a quinol + NAD(+). The catalysed reaction is a quinone + NADPH + H(+) = a quinol + NADP(+). The polypeptide is NAD(P)H dehydrogenase (quinone) (Azorhizobium caulinodans (strain ATCC 43989 / DSM 5975 / JCM 20966 / LMG 6465 / NBRC 14845 / NCIMB 13405 / ORS 571)).